A 264-amino-acid chain; its full sequence is Glutamate racemase (264 aa).

Substrate is bound by residues 12–13 (DS) and 44–45 (YG). Catalysis depends on C75, which acts as the Proton donor/acceptor. 76-77 (NT) lines the substrate pocket. C186 serves as the catalytic Proton donor/acceptor. Position 187–188 (187–188 (TH)) interacts with substrate.

It belongs to the aspartate/glutamate racemases family.

The catalysed reaction is L-glutamate = D-glutamate. Its pathway is cell wall biogenesis; peptidoglycan biosynthesis. In terms of biological role, provides the (R)-glutamate required for cell wall biosynthesis. This is Glutamate racemase from Stutzerimonas stutzeri (strain A1501) (Pseudomonas stutzeri).